Consider the following 35-residue polypeptide: Beta-amanitin proprotein (35 aa).

A propeptide spanning residues 1 to 10 (MSDINATRLP) is cleaved from the precursor. The segment at residues 11-18 (IWGIGCDP) is a cross-link (cyclopeptide (Ile-Pro)). Positions 12-16 (WGIGC) form a cross-link, 2'-cysteinyl-6'-hydroxytryptophan sulfoxide (Trp-Cys). Residues 19–35 (CVGDDVTALLTRGEALC) constitute a propeptide that is removed on maturation.

This sequence belongs to the MSDIN fungal toxin family. In terms of processing, processed by the macrocyclase-peptidase enzyme POPB to yield a toxic cyclic octapeptide. POPB first removes 10 residues from the N-terminus. Conformational trapping of the remaining peptide forces the enzyme to release this intermediate rather than proceed to macrocyclization. The enzyme rebinds the remaining peptide in a different conformation and catalyzes macrocyclization of the N-terminal 8 residues. As to expression, expressed in basidiocarps.

Toxin belonging to the bicyclic octapeptides amatoxins that acts by binding non-competitively to RNA polymerase II and greatly slowing the elongation of transcripts from target promoters. This is Beta-amanitin proprotein from Amanita exitialis (Guangzhou destroying angel).